A 56-amino-acid polypeptide reads, in one-letter code: Large ribosomal subunit protein bL32 (56 aa).

The span at 1 to 16 shows a compositional bias: basic residues; that stretch reads MAVQKSKKSRAARGMR. A disordered region spans residues 1 to 22; sequence MAVQKSKKSRAARGMRRSHDAL.

It belongs to the bacterial ribosomal protein bL32 family.

The sequence is that of Large ribosomal subunit protein bL32 from Photobacterium profundum (strain SS9).